The sequence spans 366 residues: Chorismate synthase (366 aa).

Residues Arg-48 and Arg-54 each coordinate NADP(+). FMN contacts are provided by residues 125–127 (RSS), 238–239 (NA), Gly-278, 293–297 (KPTSS), and Arg-319.

It belongs to the chorismate synthase family. In terms of assembly, homotetramer. Requires FMNH2 as cofactor.

It catalyses the reaction 5-O-(1-carboxyvinyl)-3-phosphoshikimate = chorismate + phosphate. Its pathway is metabolic intermediate biosynthesis; chorismate biosynthesis; chorismate from D-erythrose 4-phosphate and phosphoenolpyruvate: step 7/7. In terms of biological role, catalyzes the anti-1,4-elimination of the C-3 phosphate and the C-6 proR hydrogen from 5-enolpyruvylshikimate-3-phosphate (EPSP) to yield chorismate, which is the branch point compound that serves as the starting substrate for the three terminal pathways of aromatic amino acid biosynthesis. This reaction introduces a second double bond into the aromatic ring system. This Burkholderia ambifaria (strain MC40-6) protein is Chorismate synthase.